The chain runs to 509 residues: Photosystem II CP47 reaction center protein (509 aa).

The next 6 helical transmembrane spans lie at 21 to 36 (AVHMMHTALVAGWAGS), 101 to 115 (IVFSGLCFLAAIWHW), 140 to 156 (GIHLFLSGVACFGFGAF), 203 to 218 (IAAGTLGILAGLFHLS), 237 to 253 (VLSSSSIAAVFFAAFVV), and 458 to 473 (SFALLFFFGHIWHGSR).

It belongs to the PsbB/PsbC family. PsbB subfamily. PSII is composed of 1 copy each of membrane proteins PsbA, PsbB, PsbC, PsbD, PsbE, PsbF, PsbH, PsbI, PsbJ, PsbK, PsbL, PsbM, PsbT, PsbX, PsbY, PsbZ, Psb30/Ycf12, at least 3 peripheral proteins of the oxygen-evolving complex and a large number of cofactors. It forms dimeric complexes. Binds multiple chlorophylls. PSII binds additional chlorophylls, carotenoids and specific lipids. is required as a cofactor.

The protein resides in the plastid. Its subcellular location is the chloroplast thylakoid membrane. Functionally, one of the components of the core complex of photosystem II (PSII). It binds chlorophyll and helps catalyze the primary light-induced photochemical processes of PSII. PSII is a light-driven water:plastoquinone oxidoreductase, using light energy to abstract electrons from H(2)O, generating O(2) and a proton gradient subsequently used for ATP formation. In Populus deltoides (Eastern poplar), this protein is Photosystem II CP47 reaction center protein.